The primary structure comprises 345 residues: Anthranilate phosphoribosyltransferase (345 aa).

5-phospho-alpha-D-ribose 1-diphosphate contacts are provided by residues Gly-84, Gly-87–Asp-88, Thr-92, Asn-94–Thr-97, Lys-112–Ser-120, and Ser-124. Gly-84 lines the anthranilate pocket. Ser-96 is a Mg(2+) binding site. Asn-115 lines the anthranilate pocket. Arg-170 serves as a coordination point for anthranilate. Positions 229 and 230 each coordinate Mg(2+).

Belongs to the anthranilate phosphoribosyltransferase family. As to quaternary structure, homodimer. The cofactor is Mg(2+).

It catalyses the reaction N-(5-phospho-beta-D-ribosyl)anthranilate + diphosphate = 5-phospho-alpha-D-ribose 1-diphosphate + anthranilate. It participates in amino-acid biosynthesis; L-tryptophan biosynthesis; L-tryptophan from chorismate: step 2/5. Functionally, catalyzes the transfer of the phosphoribosyl group of 5-phosphorylribose-1-pyrophosphate (PRPP) to anthranilate to yield N-(5'-phosphoribosyl)-anthranilate (PRA). This chain is Anthranilate phosphoribosyltransferase, found in Xanthomonas axonopodis pv. citri (strain 306).